We begin with the raw amino-acid sequence, 238 residues long: Ribonuclease PH (238 aa).

The segment at 64–86 (GMLPRSTGSRMDREAARGKQSGR) is disordered. Phosphate contacts are provided by residues Arg86 and 124–126 (GTR).

It belongs to the RNase PH family. In terms of assembly, homohexameric ring arranged as a trimer of dimers.

It carries out the reaction tRNA(n+1) + phosphate = tRNA(n) + a ribonucleoside 5'-diphosphate. Functionally, phosphorolytic 3'-5' exoribonuclease that plays an important role in tRNA 3'-end maturation. Removes nucleotide residues following the 3'-CCA terminus of tRNAs; can also add nucleotides to the ends of RNA molecules by using nucleoside diphosphates as substrates, but this may not be physiologically important. Probably plays a role in initiation of 16S rRNA degradation (leading to ribosome degradation) during starvation. This is Ribonuclease PH from Methylobacillus flagellatus (strain ATCC 51484 / DSM 6875 / VKM B-1610 / KT).